The sequence spans 155 residues: Putative methyl-CpG-binding domain protein 12 (155 aa).

The CW-type zinc finger occupies 1–53 (MVQCTDCKKWRLIPSMQHYNIIKETQLQTPFVCGTTSGWTPNMSCNVPQDGTT). Positions 3-45 (QCTDCKKWRLIPSMQHYNIIKETQLQTPFVCGTTSGWTPNMSC) match the MBD-associated domain (MAD) motif. 4 residues coordinate Zn(2+): cysteine 4, cysteine 7, cysteine 33, and cysteine 45. In terms of domain architecture, MBD spans 53 to 126 (TCDTWPSIPP…SQFSFQIPKP (74 aa)). Residues 130–155 (NYVKKRTRPVKRRKSSKDNNCEKGKK) are disordered. Residues 133-144 (KKRTRPVKRRKS) show a composition bias toward basic residues. Positions 140–147 (KRRKSSKD) match the Nuclear localization signal motif. Basic and acidic residues predominate over residues 145 to 155 (SKDNNCEKGKK).

The protein localises to the nucleus. Functionally, probable transcriptional regulator. The polypeptide is Putative methyl-CpG-binding domain protein 12 (MBD12) (Arabidopsis thaliana (Mouse-ear cress)).